Consider the following 305-residue polypeptide: Axin interactor, dorsalization-associated protein A (305 aa).

Residues 153–220 form an axin-binding region; it reads GTLLPRLPSE…RKEDTYVHFN (68 aa). In terms of domain architecture, C2 Aida-type spans 156–303; the sequence is LPRLPSEPGM…LYLHLLQTLL (148 aa).

Belongs to the AIDA family.

In terms of biological role, acts as a ventralizing factor during embryogenesis. Inhibits axin-mediated JNK activation by binding axin and disrupting axin homodimerization. This in turn antagonizes a Wnt/beta-catenin-independent dorsalization pathway activated by axin/JNK-signaling. This Xenopus laevis (African clawed frog) protein is Axin interactor, dorsalization-associated protein A (aida-a).